Consider the following 393-residue polypeptide: NAD(P)H-quinone oxidoreductase subunit H, chloroplastic (393 aa).

This sequence belongs to the complex I 49 kDa subunit family. NDH is composed of at least 16 different subunits, 5 of which are encoded in the nucleus.

The protein resides in the plastid. Its subcellular location is the chloroplast thylakoid membrane. The enzyme catalyses a plastoquinone + NADH + (n+1) H(+)(in) = a plastoquinol + NAD(+) + n H(+)(out). It catalyses the reaction a plastoquinone + NADPH + (n+1) H(+)(in) = a plastoquinol + NADP(+) + n H(+)(out). In terms of biological role, NDH shuttles electrons from NAD(P)H:plastoquinone, via FMN and iron-sulfur (Fe-S) centers, to quinones in the photosynthetic chain and possibly in a chloroplast respiratory chain. The immediate electron acceptor for the enzyme in this species is believed to be plastoquinone. Couples the redox reaction to proton translocation, and thus conserves the redox energy in a proton gradient. The sequence is that of NAD(P)H-quinone oxidoreductase subunit H, chloroplastic from Lotus japonicus (Lotus corniculatus var. japonicus).